We begin with the raw amino-acid sequence, 84 residues long: Small ribosomal subunit protein uS17 (84 aa).

The protein belongs to the universal ribosomal protein uS17 family. In terms of assembly, part of the 30S ribosomal subunit.

Functionally, one of the primary rRNA binding proteins, it binds specifically to the 5'-end of 16S ribosomal RNA. The protein is Small ribosomal subunit protein uS17 of Karelsulcia muelleri (strain GWSS) (Sulcia muelleri).